The sequence spans 58 residues: Photosystem II reaction center protein K (58 aa).

Positions 1-21 (MLVISNVYPSNLFTLINPFFA) are excised as a propeptide. A helical transmembrane segment spans residues 29 to 49 (IFDPIVDVMPIIPVFFFLLAF).

This sequence belongs to the PsbK family. As to quaternary structure, PSII is composed of 1 copy each of membrane proteins PsbA, PsbB, PsbC, PsbD, PsbE, PsbF, PsbH, PsbI, PsbJ, PsbK, PsbL, PsbM, PsbT, PsbX, PsbY, PsbZ, Psb30/Ycf12, at least 3 peripheral proteins of the oxygen-evolving complex and a large number of cofactors. It forms dimeric complexes.

It localises to the plastid. It is found in the chloroplast thylakoid membrane. In terms of biological role, one of the components of the core complex of photosystem II (PSII). PSII is a light-driven water:plastoquinone oxidoreductase that uses light energy to abstract electrons from H(2)O, generating O(2) and a proton gradient subsequently used for ATP formation. It consists of a core antenna complex that captures photons, and an electron transfer chain that converts photonic excitation into a charge separation. The chain is Photosystem II reaction center protein K from Psilotum nudum (Whisk fern).